The primary structure comprises 418 residues: Elongation factor 1-gamma 1 (418 aa).

The region spanning 1-82 is the GST N-terminal domain; it reads MALVLHTFDG…YVTRSKSDNP (82 aa). The GST C-terminal domain occupies 87-213; that stretch reads SLIEYAHIEQ…GDVKQADSVP (127 aa). Residues 211 to 265 form a disordered region; it reads SVPQVQKKAAAPKEQKPKEAKKEAPKEAPKPKAAEKPEEEEEAPKPKPKNPLDLL. The span at 221–246 shows a compositional bias: basic and acidic residues; the sequence is APKEQKPKEAKKEAPKEAPKPKAAEK. Residues 258–418 form the EF-1-gamma C-terminal domain; sequence PKNPLDLLPP…EALLDAKCFK (161 aa).

As to quaternary structure, EF-1 is composed of four subunits: alpha, beta, delta, and gamma.

Its function is as follows. Probably plays a role in anchoring the complex to other cellular components. The chain is Elongation factor 1-gamma 1 from Oryza sativa subsp. japonica (Rice).